Reading from the N-terminus, the 220-residue chain is Pyridoxine/pyridoxamine 5'-phosphate oxidase (220 aa).

Residues 8–11 (RKSY) and lysine 66 contribute to the substrate site. FMN is bound by residues 61–66 (RVVLIK), 76–77 (FT), arginine 82, and lysine 83. Substrate contacts are provided by tyrosine 123, arginine 127, and serine 131. Residues 140–141 (QS) and tryptophan 184 contribute to the FMN site. 190–192 (RLH) is a substrate binding site. Arginine 194 provides a ligand contact to FMN.

The protein belongs to the pyridoxamine 5'-phosphate oxidase family. As to quaternary structure, homodimer. The cofactor is FMN.

It catalyses the reaction pyridoxamine 5'-phosphate + O2 + H2O = pyridoxal 5'-phosphate + H2O2 + NH4(+). The enzyme catalyses pyridoxine 5'-phosphate + O2 = pyridoxal 5'-phosphate + H2O2. The protein operates within cofactor metabolism; pyridoxal 5'-phosphate salvage; pyridoxal 5'-phosphate from pyridoxamine 5'-phosphate: step 1/1. It functions in the pathway cofactor metabolism; pyridoxal 5'-phosphate salvage; pyridoxal 5'-phosphate from pyridoxine 5'-phosphate: step 1/1. Functionally, catalyzes the oxidation of either pyridoxine 5'-phosphate (PNP) or pyridoxamine 5'-phosphate (PMP) into pyridoxal 5'-phosphate (PLP). This is Pyridoxine/pyridoxamine 5'-phosphate oxidase from Albidiferax ferrireducens (strain ATCC BAA-621 / DSM 15236 / T118) (Rhodoferax ferrireducens).